Reading from the N-terminus, the 507-residue chain is Glycerol kinase 1 (507 aa).

ADP is bound at residue T12. Residues T12, T13, and S14 each coordinate ATP. A sn-glycerol 3-phosphate-binding site is contributed by T12. ADP is bound at residue R16. Sn-glycerol 3-phosphate is bound by residues R82, E83, Y134, and D249. Residues R82, E83, Y134, D249, and Q250 each contribute to the glycerol site. ADP contacts are provided by T271 and G315. The ATP site is built by T271, G315, Q319, and G416. Residues G416 and N420 each contribute to the ADP site.

This sequence belongs to the FGGY kinase family.

The catalysed reaction is glycerol + ATP = sn-glycerol 3-phosphate + ADP + H(+). Its pathway is polyol metabolism; glycerol degradation via glycerol kinase pathway; sn-glycerol 3-phosphate from glycerol: step 1/1. Inhibited by fructose 1,6-bisphosphate (FBP). Key enzyme in the regulation of glycerol uptake and metabolism. Catalyzes the phosphorylation of glycerol to yield sn-glycerol 3-phosphate. This Streptomyces coelicolor (strain ATCC BAA-471 / A3(2) / M145) protein is Glycerol kinase 1.